Reading from the N-terminus, the 264-residue chain is Proteasome subunit beta type-4 (264 aa).

At M1 the chain carries N-acetylmethionine. The propeptide occupies 1-45 (MEALLESRSGLWAGGPAPGQFYRIPPTPGSSVDPVSALYGSPITR). Phosphotyrosine is present on Y102.

The protein belongs to the peptidase T1B family. The 26S proteasome consists of a 20S proteasome core and two 19S regulatory subunits. The 20S proteasome core is a barrel-shaped complex made of 28 subunits that are arranged in four stacked rings. The two outer rings are each formed by seven alpha subunits, and the two inner rings are formed by seven beta subunits. The proteolytic activity is exerted by three beta-subunits PSMB5, PSMB6 and PSMB7. Forms a ternary complex with SMAD1 and OAZ1 before PSMB4 is incorporated into the 20S proteasome. Interacts with PRPF19.

It is found in the cytoplasm. The protein resides in the nucleus. Its function is as follows. Non-catalytic component of the 20S core proteasome complex involved in the proteolytic degradation of most intracellular proteins. This complex plays numerous essential roles within the cell by associating with different regulatory particles. Associated with two 19S regulatory particles, forms the 26S proteasome and thus participates in the ATP-dependent degradation of ubiquitinated proteins. The 26S proteasome plays a key role in the maintenance of protein homeostasis by removing misfolded or damaged proteins that could impair cellular functions, and by removing proteins whose functions are no longer required. Associated with the PA200 or PA28, the 20S proteasome mediates ubiquitin-independent protein degradation. This type of proteolysis is required in several pathways including spermatogenesis (20S-PA200 complex) or generation of a subset of MHC class I-presented antigenic peptides (20S-PA28 complex). SMAD1/OAZ1/PSMB4 complex mediates the degradation of the CREBBP/EP300 repressor SNIP1. The sequence is that of Proteasome subunit beta type-4 (PSMB4) from Bos taurus (Bovine).